Reading from the N-terminus, the 356-residue chain is Heparan sulfate 2-O-sulfotransferase 1 (356 aa).

Over 1 to 11 (MGLLRIMLPPK) the chain is Cytoplasmic. A helical; Signal-anchor for type II membrane protein membrane pass occupies residues 12–28 (LQLLAVLVFGVAVLFLE). The stretch at 24 to 51 (VLFLENQIQKLEESRGKLERAIARHEVR) forms a coiled coil. Residues 29 to 356 (NQIQKLEESR…FYEKIYPKSN (328 aa)) are Lumenal-facing. The adenosine 3',5'-bisphosphate site is built by Lys83, Thr84, Ala85, Ser86, Thr87, and Ser88. 2 N-linked (GlcNAc...) asparagine glycosylation sites follow: Asn108 and Asn127. Active-site residues include His140 and His142. Residues Arg164 and Ser172 each contribute to the adenosine 3',5'-bisphosphate site. 2 cysteine pairs are disulfide-bonded: Cys201–Cys209 and Cys222–Cys228. 4 residues coordinate adenosine 3',5'-bisphosphate: Tyr279, Ser285, Thr290, and Lys293.

Belongs to the sulfotransferase 3 family. Homotrimer. Expressed in heart, limb, head and trunk. At stages 20 and 24, it is expressed in the most regions of the first and second pharyngeal arche. In both wing and leg buds, it is detected at the overlying ectoderm and mesenchyme throughout stages 21, 23 and 24.

It is found in the golgi apparatus membrane. Catalyzes the transfer of a sulfo group from 3'-phospho-5'-adenylyl sulfate (PAPS) to the 2-OH position of iduronic acid (IdoA) or glucuronic acid (GlcA) within the heparan sulfate (HS) chain and participates in HS biosynthesis. This is Heparan sulfate 2-O-sulfotransferase 1 from Gallus gallus (Chicken).